The primary structure comprises 775 residues: Glycerol-3-phosphate acyltransferase (775 aa).

The HXXXXD motif signature appears at histidine 268–aspartate 273.

It belongs to the GPAT/DAPAT family.

It is found in the cell membrane. The catalysed reaction is sn-glycerol 3-phosphate + an acyl-CoA = a 1-acyl-sn-glycero-3-phosphate + CoA. The protein operates within phospholipid metabolism; CDP-diacylglycerol biosynthesis; CDP-diacylglycerol from sn-glycerol 3-phosphate: step 1/3. The polypeptide is Glycerol-3-phosphate acyltransferase (plsB) (Mycobacterium leprae (strain TN)).